Here is a 65-residue protein sequence, read N- to C-terminus: UPF0434 protein Mmwyl1_2153 (65 aa).

The protein belongs to the UPF0434 family.

This Marinomonas sp. (strain MWYL1) protein is UPF0434 protein Mmwyl1_2153.